Consider the following 740-residue polypeptide: Glycerol dehydrogenase large subunit (740 aa).

Residues 1–29 form the signal peptide; that stretch reads MRRPYLLATAAGLALACSPLIAHAQFAPA. Disordered regions lie at residues 28–105 and 442–468; these read PAGA…GDWV and LPVEERPAPSPGVIPGDPRSPTQPWSV. Low complexity predominate over residues 34–43; the sequence is EPSSSVPGPG. Residues 46-58 are compositionally biased toward polar residues; sequence SEPTENSPKSQSY.

The protein belongs to the bacterial PQQ dehydrogenase family. Pyrroloquinoline quinone serves as cofactor.

The protein localises to the secreted. The catalysed reaction is glycerol + A = dihydroxyacetone + AH2. In terms of biological role, catalyzes the oxidation of glycerol to glycerone. Also acts, more slowly, on a number of other polyols including D-sorbitol, D-arabinitol, D-mannitol, meso-erythritol, adonitol and propylene glycol. In Gluconobacter thailandicus, this protein is Glycerol dehydrogenase large subunit (sldA).